We begin with the raw amino-acid sequence, 580 residues long: Rap guanine nucleotide exchange factor 5 (580 aa).

Residues 68 to 201 (DRYVVVSGTP…ELKEFQKILG (134 aa)) enclose the N-terminal Ras-GEF domain. The 235-residue stretch at 345–579 (NTWDLALELM…FELSHRIEPR (235 aa)) folds into the Ras-GEF domain.

As to expression, widely expressed with highest levels in brain.

The protein resides in the nucleus. Its function is as follows. Guanine nucleotide exchange factor (GEF) for RAP1A, RAP2A and MRAS/M-Ras-GTP. Its association with MRAS inhibits Rap1 activation. In Homo sapiens (Human), this protein is Rap guanine nucleotide exchange factor 5 (RAPGEF5).